A 405-amino-acid chain; its full sequence is MGSYMNKTSVVKVGNVLIGGDNPVVVQSMTDTYTADVEKTVKQILALHKAGSEIVRITVNDESAAAAVPEIVKELAKHDCHVPLVGDFHYNGHTLLSKYPECAKALAKYRINPGNVGFGKKKDTQFAEIIKIAIANDKPVRIGVNWGSLDQALLARLIDENNAQENPLSLQQIMHKALITSALESAKYAEELGLAKDKIIISCKVSEVQDLIAVYQKLAKECGYALHLGLTEAGMGTKGIVASAVSLGILLQQGIGNTIRVSLTPAPNAPRTEEVRVCREILQNLGMRTFTPSVTSCPGCGRTTSSFFRELTSKVKDHLDEKMHTWKEQYHGVEAMKVAVMGCVVNGPGESKNADIGISLPGSGESPVAPVFIDGKKAHTLRGDNISEEFIEIVENYVKNRYGKK.

Residues C297, C300, C343, and E350 each contribute to the [4Fe-4S] cluster site.

It belongs to the IspG family. Requires [4Fe-4S] cluster as cofactor.

It carries out the reaction (2E)-4-hydroxy-3-methylbut-2-enyl diphosphate + oxidized [flavodoxin] + H2O + 2 H(+) = 2-C-methyl-D-erythritol 2,4-cyclic diphosphate + reduced [flavodoxin]. It functions in the pathway isoprenoid biosynthesis; isopentenyl diphosphate biosynthesis via DXP pathway; isopentenyl diphosphate from 1-deoxy-D-xylulose 5-phosphate: step 5/6. In terms of biological role, converts 2C-methyl-D-erythritol 2,4-cyclodiphosphate (ME-2,4cPP) into 1-hydroxy-2-methyl-2-(E)-butenyl 4-diphosphate. The protein is 4-hydroxy-3-methylbut-2-en-1-yl diphosphate synthase (flavodoxin) of Francisella tularensis subsp. tularensis (strain FSC 198).